A 251-amino-acid chain; its full sequence is Isoprenyl transferase (251 aa).

The active site involves D31. D31 contributes to the Mg(2+) binding site. Substrate contacts are provided by residues 32–35 (GNGR), W36, R44, H48, and 76–78 (STE). The Proton acceptor role is filled by N79. Substrate-binding positions include W80, R82, R199, and 205 to 207 (RIS). E218 is a Mg(2+) binding site.

This sequence belongs to the UPP synthase family. Homodimer. Requires Mg(2+) as cofactor.

Catalyzes the condensation of isopentenyl diphosphate (IPP) with allylic pyrophosphates generating different type of terpenoids. The chain is Isoprenyl transferase from Thermosynechococcus vestitus (strain NIES-2133 / IAM M-273 / BP-1).